The following is a 224-amino-acid chain: Urease accessory protein UreF (224 aa).

It belongs to the UreF family. UreD, UreF and UreG form a complex that acts as a GTP-hydrolysis-dependent molecular chaperone, activating the urease apoprotein by helping to assemble the nickel containing metallocenter of UreC. The UreE protein probably delivers the nickel.

The protein localises to the cytoplasm. Required for maturation of urease via the functional incorporation of the urease nickel metallocenter. The polypeptide is Urease accessory protein UreF (Pseudomonas putida (strain ATCC 700007 / DSM 6899 / JCM 31910 / BCRC 17059 / LMG 24140 / F1)).